Reading from the N-terminus, the 257-residue chain is Leucine-rich repeat-containing protein 3 (257 aa).

Positions methionine 1–serine 32 are cleaved as a signal peptide. Residues cysteine 33–alanine 64 enclose the LRRNT domain. 3 LRR repeats span residues aspartate 65–histidine 86, glutamine 89–glycine 110, and glycine 114–lysine 135. The 54-residue stretch at asparagine 145 to threonine 198 folds into the LRRCT domain. The helical transmembrane segment at valine 205 to tyrosine 225 threads the bilayer.

This sequence belongs to the LRRC3 family.

Its subcellular location is the membrane. The polypeptide is Leucine-rich repeat-containing protein 3 (Lrrc3) (Mus musculus (Mouse)).